We begin with the raw amino-acid sequence, 83 residues long: Cell division topological specificity factor (83 aa).

The protein belongs to the MinE family.

Functionally, prevents the cell division inhibition by proteins MinC and MinD at internal division sites while permitting inhibition at polar sites. This ensures cell division at the proper site by restricting the formation of a division septum at the midpoint of the long axis of the cell. This Bordetella parapertussis (strain 12822 / ATCC BAA-587 / NCTC 13253) protein is Cell division topological specificity factor.